The chain runs to 406 residues: Cysteine desulfurase (406 aa).

K226 carries the N6-(pyridoxal phosphate)lysine modification. C364 (cysteine persulfide intermediate) is an active-site residue.

Belongs to the class-V pyridoxal-phosphate-dependent aminotransferase family. Csd subfamily. In terms of assembly, homodimer. Interacts with SufE and the SufBCD complex composed of SufB, SufC and SufD. The interaction with SufE is required to mediate the direct transfer of the sulfur atom from the S-sulfanylcysteine. Pyridoxal 5'-phosphate serves as cofactor.

The protein resides in the cytoplasm. It catalyses the reaction (sulfur carrier)-H + L-cysteine = (sulfur carrier)-SH + L-alanine. The catalysed reaction is L-selenocysteine + AH2 = hydrogenselenide + L-alanine + A + H(+). The protein operates within cofactor biosynthesis; iron-sulfur cluster biosynthesis. Its function is as follows. Cysteine desulfurases mobilize the sulfur from L-cysteine to yield L-alanine, an essential step in sulfur metabolism for biosynthesis of a variety of sulfur-containing biomolecules. Component of the suf operon, which is activated and required under specific conditions such as oxidative stress and iron limitation. Acts as a potent selenocysteine lyase in vitro, that mobilizes selenium from L-selenocysteine. Selenocysteine lyase activity is however unsure in vivo. The protein is Cysteine desulfurase of Escherichia coli (strain K12 / MC4100 / BW2952).